The following is a 423-amino-acid chain: GTPase Obg (423 aa).

In terms of domain architecture, Obg spans 1-158 (MFIDTARIYI…MWVRLELKLL (158 aa)). The OBG-type G domain occupies 159 to 329 (ADVGLIGFPN…LLDKTIEILS (171 aa)). GTP contacts are provided by residues 165–172 (GFPNAGKS), 190–194 (FTTLT), 211–214 (DIPG), 281–284 (NKID), and 310–312 (SAL). Residues S172 and T192 each coordinate Mg(2+). An OCT domain is found at 346–423 (TPPEEEETLN…VRDFEFEYYE (78 aa)).

Belongs to the TRAFAC class OBG-HflX-like GTPase superfamily. OBG GTPase family. As to quaternary structure, monomer. Mg(2+) serves as cofactor.

It localises to the cytoplasm. Functionally, an essential GTPase which binds GTP, GDP and possibly (p)ppGpp with moderate affinity, with high nucleotide exchange rates and a fairly low GTP hydrolysis rate. Plays a role in control of the cell cycle, stress response, ribosome biogenesis and in those bacteria that undergo differentiation, in morphogenesis control. The chain is GTPase Obg from Thermoanaerobacter pseudethanolicus (strain ATCC 33223 / 39E) (Clostridium thermohydrosulfuricum).